A 338-amino-acid chain; its full sequence is Aspartate carbamoyltransferase catalytic subunit (338 aa).

Residues Arg-59 and Thr-60 each contribute to the carbamoyl phosphate site. Lys-87 contacts L-aspartate. Residues Arg-109, His-142, and Gln-145 each contribute to the carbamoyl phosphate site. Arg-182 and Arg-253 together coordinate L-aspartate. Carbamoyl phosphate contacts are provided by Gly-294 and Pro-295.

It belongs to the aspartate/ornithine carbamoyltransferase superfamily. ATCase family. Heterododecamer (2C3:3R2) of six catalytic PyrB chains organized as two trimers (C3), and six regulatory PyrI chains organized as three dimers (R2).

It carries out the reaction carbamoyl phosphate + L-aspartate = N-carbamoyl-L-aspartate + phosphate + H(+). It participates in pyrimidine metabolism; UMP biosynthesis via de novo pathway; (S)-dihydroorotate from bicarbonate: step 2/3. In terms of biological role, catalyzes the condensation of carbamoyl phosphate and aspartate to form carbamoyl aspartate and inorganic phosphate, the committed step in the de novo pyrimidine nucleotide biosynthesis pathway. This Prochlorococcus marinus subsp. pastoris (strain CCMP1986 / NIES-2087 / MED4) protein is Aspartate carbamoyltransferase catalytic subunit.